The following is a 97-amino-acid chain: RNA-binding protein Hfq (97 aa).

Residues 10–70 (DPFLNALRKE…ISTIVPARSV (61 aa)) enclose the Sm domain.

Belongs to the Hfq family. Homohexamer.

RNA chaperone that binds small regulatory RNA (sRNAs) and mRNAs to facilitate mRNA translational regulation in response to envelope stress, environmental stress and changes in metabolite concentrations. Also binds with high specificity to tRNAs. This is RNA-binding protein Hfq from Neisseria gonorrhoeae (strain ATCC 700825 / FA 1090).